The sequence spans 86 residues: Cell division protein ZapA (86 aa).

This sequence belongs to the ZapA family. Type 2 subfamily. In terms of assembly, homodimer. Interacts with FtsZ.

The protein resides in the cytoplasm. Activator of cell division through the inhibition of FtsZ GTPase activity, therefore promoting FtsZ assembly into bundles of protofilaments necessary for the formation of the division Z ring. It is recruited early at mid-cell but it is not essential for cell division. The protein is Cell division protein ZapA of Oceanobacillus iheyensis (strain DSM 14371 / CIP 107618 / JCM 11309 / KCTC 3954 / HTE831).